The chain runs to 172 residues: Small ribosomal subunit protein uS5 (172 aa).

Positions 17–80 (LREKMISVNR…DEARRKMVKV (64 aa)) constitute an S5 DRBM domain.

This sequence belongs to the universal ribosomal protein uS5 family. In terms of assembly, part of the 30S ribosomal subunit. Contacts proteins S4 and S8.

Its function is as follows. With S4 and S12 plays an important role in translational accuracy. Located at the back of the 30S subunit body where it stabilizes the conformation of the head with respect to the body. This chain is Small ribosomal subunit protein uS5, found in Cupriavidus pinatubonensis (strain JMP 134 / LMG 1197) (Cupriavidus necator (strain JMP 134)).